The chain runs to 193 residues: Probable DNA-directed RNA polymerase subunit delta (193 aa).

An HTH HARE-type domain is found at 14–83; that stretch reads LSMIEVARAI…GENKWGLRSW (70 aa). Acidic residues-rich tracts occupy residues 117 to 134 and 142 to 193; these read GDDD…DEDN and EYDD…VVDE. The tract at residues 117 to 193 is disordered; it reads GDDDAIDYGH…EYSDEEVVDE (77 aa).

It belongs to the RpoE family. In terms of assembly, RNAP is composed of a core of 2 alpha, a beta and a beta' subunits. The core is associated with a delta subunit and one of several sigma factors.

Participates in both the initiation and recycling phases of transcription. In the presence of the delta subunit, RNAP displays an increased specificity of transcription, a decreased affinity for nucleic acids, and an increased efficiency of RNA synthesis because of enhanced recycling. The protein is Probable DNA-directed RNA polymerase subunit delta of Streptococcus suis (strain 05ZYH33).